The chain runs to 186 residues: Putative 5'(3')-deoxyribonucleotidase (186 aa).

Catalysis depends on aspartate 6, which acts as the Nucleophile. Mg(2+)-binding residues include aspartate 6, aspartate 8, and aspartate 137. Aspartate 8 acts as the Proton donor in catalysis.

This sequence belongs to the 5'(3')-deoxyribonucleotidase family. It depends on Mg(2+) as a cofactor.

In terms of biological role, dephosphorylates the 5' and 2'(3')-phosphates of deoxyribonucleotides. This chain is Putative 5'(3')-deoxyribonucleotidase, found in Bordetella bronchiseptica (strain ATCC BAA-588 / NCTC 13252 / RB50) (Alcaligenes bronchisepticus).